Reading from the N-terminus, the 621-residue chain is DnaJ homolog subfamily C member 2 (621 aa).

M1 is modified (N-acetylmethionine). Residues S47, S49, S60, and S63 each carry the phosphoserine modification. The J domain occupies 88–161; sequence DHYAVLGLGH…VKRRAFNSVD (74 aa). The segment at 160-250 is ZRF1-UBD; it reads VDPTFDNSVP…RDERKWIEKQ (91 aa). S183 is modified (phosphoserine). Disordered regions lie at residues 287–312 and 426–453; these read GKAKKEAEKRAKAEARRKEQEAKEKQ and KEEADARMRQASKNAEKSTGGSGSGSKN. 2 consecutive SANT domains span residues 449–511 and 549–604; these read SGSK…KLDP and IDSI…EMVK.

Component of ribosome-associated complex (RAC), a heterodimer composed of Hsp70/DnaK-type chaperone HSPA14 and Hsp40/DnaJ-type chaperone DNAJC2. Interacts (via ZRF1-UBD region) with ID1. Phosphorylated in M (mitotic) phase.

It localises to the nucleus. The protein localises to the cytoplasm. Its subcellular location is the cytosol. Its function is as follows. Acts both as a chaperone in the cytosol and as a chromatin regulator in the nucleus. When cytosolic, acts as a molecular chaperone: component of the ribosome-associated complex (RAC), a complex involved in folding or maintaining nascent polypeptides in a folding-competent state. In the RAC complex, stimulates the ATPase activity of the ribosome-associated pool of Hsp70-type chaperones HSPA14 that bind to the nascent polypeptide chain. When nuclear, mediates the switching from polycomb-repressed genes to an active state: specifically recruited at histone H2A ubiquitinated at 'Lys-119' (H2AK119ub), and promotes the displacement of the polycomb PRC1 complex from chromatin, thereby facilitating transcription activation. The sequence is that of DnaJ homolog subfamily C member 2 (Dnajc2) from Rattus norvegicus (Rat).